Consider the following 189-residue polypeptide: Peptidyl-tRNA hydrolase (189 aa).

Histidine 14 provides a ligand contact to tRNA. Residue histidine 19 is the Proton acceptor of the active site. Residues tyrosine 64, asparagine 66, and asparagine 112 each coordinate tRNA.

The protein belongs to the PTH family. Monomer.

It localises to the cytoplasm. It catalyses the reaction an N-acyl-L-alpha-aminoacyl-tRNA + H2O = an N-acyl-L-amino acid + a tRNA + H(+). Functionally, hydrolyzes ribosome-free peptidyl-tRNAs (with 1 or more amino acids incorporated), which drop off the ribosome during protein synthesis, or as a result of ribosome stalling. In terms of biological role, catalyzes the release of premature peptidyl moieties from peptidyl-tRNA molecules trapped in stalled 50S ribosomal subunits, and thus maintains levels of free tRNAs and 50S ribosomes. This is Peptidyl-tRNA hydrolase from Chlorobium phaeobacteroides (strain BS1).